Consider the following 238-residue polypeptide: 2,3,4,5-tetrahydropyridine-2,6-dicarboxylate N-acetyltransferase (238 aa).

It belongs to the transferase hexapeptide repeat family. DapH subfamily.

The enzyme catalyses (S)-2,3,4,5-tetrahydrodipicolinate + acetyl-CoA + H2O = L-2-acetamido-6-oxoheptanedioate + CoA. It functions in the pathway amino-acid biosynthesis; L-lysine biosynthesis via DAP pathway; LL-2,6-diaminopimelate from (S)-tetrahydrodipicolinate (acetylase route): step 1/3. In terms of biological role, catalyzes the transfer of an acetyl group from acetyl-CoA to tetrahydrodipicolinate. This chain is 2,3,4,5-tetrahydropyridine-2,6-dicarboxylate N-acetyltransferase, found in Thermotoga neapolitana (strain ATCC 49049 / DSM 4359 / NBRC 107923 / NS-E).